The primary structure comprises 114 residues: Ghrelin (114 aa).

The signal sequence occupies residues 1–24 (MNFGKAAIFGVVLFCLLWTEGAQA). Thr27 carries O-decanoyl threonine; alternate lipidation. Thr27 is lipidated: O-octanoyl threonine; alternate. The propeptide at 55–114 (GVEDDLAGEEIGVTFPLDMKMTQEQFQKQRAAVQDFLYSSLLSLGSVQDTEDKNENPQSQ) is removed in mature form.

It belongs to the motilin family. O-octanoylated by GOAT/MBOAT4. O-octanoylation or O-decanoylation is essential for activity. The O-decanoylated form ghrelin-27-C10 differs in the length of the carbon backbone of the carboxylic acid bound to Thr-27. 33% of frog ghrelin is O-decanoylated. In terms of processing, 80% of frog ghrelin has Asn-52 cleaved from its C-terminus giving rise to ghrelin-27. In terms of tissue distribution, high levels in stomach. Moderate levels in small intestine, pancreas and testis. Low levels in heart, lung and gall bladder.

It localises to the secreted. Its function is as follows. Ligand for growth hormone secretagogue receptor type 1 (GHSR). Induces the release of growth hormone from the pituitary. Has an appetite-stimulating effect, induces adiposity and stimulates gastric acid secretion. Involved in growth regulation. This Aquarana catesbeiana (American bullfrog) protein is Ghrelin (GHRL).